Consider the following 190-residue polypeptide: Nucleoside triphosphate pyrophosphatase (190 aa).

D69 functions as the Proton acceptor in the catalytic mechanism.

The protein belongs to the Maf family. The cofactor is a divalent metal cation.

The protein localises to the cytoplasm. The catalysed reaction is a ribonucleoside 5'-triphosphate + H2O = a ribonucleoside 5'-phosphate + diphosphate + H(+). It catalyses the reaction a 2'-deoxyribonucleoside 5'-triphosphate + H2O = a 2'-deoxyribonucleoside 5'-phosphate + diphosphate + H(+). Functionally, nucleoside triphosphate pyrophosphatase. May have a dual role in cell division arrest and in preventing the incorporation of modified nucleotides into cellular nucleic acids. In Helicobacter pylori (strain J99 / ATCC 700824) (Campylobacter pylori J99), this protein is Nucleoside triphosphate pyrophosphatase.